A 144-amino-acid polypeptide reads, in one-letter code: Small ribosomal subunit protein bS6 (144 aa).

The interval 92-144 (KVDGHDEGPSVQMQKRDDRGDREERGDRGDRGDRGPRGDRGPREDRGPRPERR) is disordered. The segment covering 93 to 144 (VDGHDEGPSVQMQKRDDRGDREERGDRGDRGDRGPRGDRGPREDRGPRPERR) has biased composition (basic and acidic residues).

It belongs to the bacterial ribosomal protein bS6 family.

Binds together with bS18 to 16S ribosomal RNA. In Rhodobacter capsulatus (strain ATCC BAA-309 / NBRC 16581 / SB1003), this protein is Small ribosomal subunit protein bS6 (rpsF).